Consider the following 754-residue polypeptide: MESLFPNKGEIIRELLKDPLILKNDSKRSNGSELELDSSDLLQREAILANELNILDNLKTFLNLIKEVKTNLNILELENCYYSLQSLRKKMRNNAAYLKQSFNFQQSISTYVDTLHLELVSTLYKILTNGFWKITENSIQFTPTVEWGKDKVHIEYDTFMDFVAQQYFPKGSLDNQAWFILDMTSADSQEQVRAKLNTIMKEYMNLSRIVSMIKNSIFISGKEISYENEKNILVFSKSSSHGQHCVSTVLTSFEAVCDFMLDGLAFRDRKTLSYELGPLFNTEFTKFVKNNASIILESLDSPLKNLVSVINNKLTRLVAKSEVTNWTHSGKEIQDLLMNKQLYYNLLLDKVLESHISEIRSIFEDPKKSWQNLEVVELTTSNTNTMSEKIGKNDSDVQNEKELHNAVSKDDDWNWEVEDDDADAWGDEIDVNIDDEEEKTNQEKEKEPEEEENAWDEAWAIDENIDDASLENGKEHLKAHDVGSLDKDHIEVTQLPKLFLAISQNFKSSFADSHVDEQYFAYKYNLLQTSYMAMCTANFSHNWCQLYVDMRYLIERDEKLYRIKELTRNLLETKLNMKYRIVCQLIRHQLTEFRENERNPSWDATIEKLLPYILKEIVRPLQKIRGEEGSRYLLSFLNFLYNDCVTKEILKWQIISEVNSENLGELVSLLVNNTDIQLLAKEPSYKKMREKFATMGKFLPLHLKEIMEMFYNGDFYLFATDELIQWIELLFADTPLRRNAIDDIYEIRGTALDD.

Residues Met-1 to Met-200 form an interaction with TIP20 region. Positions Ala-406–Thr-440 are interaction with RET1. Residues Ala-406–Trp-459 form an interaction with RET2 region. Positions Trp-425–Glu-438 are enriched in acidic residues. Residues Trp-425–Ala-454 form a disordered region.

Component of a peripheral membrane protein complex consisting of DSL1, SEC39/DSL3 and TIP20. Bound to a SNARE complex consisting of UFE1, USE1, SEC20 and SEC22 or YKT6 through direct interaction of TIP20 with SEC20. Binds the coatomer complex through direct interaction with RET2/COPD and RET1/COPA. Binds TIP20 and SEC39/DSL3.

The protein localises to the endoplasmic reticulum membrane. Its function is as follows. Required for protein transport between the Golgi and the endoplasmic reticulum. May tether coatomer-coated retrograde transport vesicles to the ER membrane through interaction with coatomer as well as the SNARE complex. May contribute to the stabilization of the SNARE complex. This chain is Protein transport protein DSL1 (DSL1), found in Saccharomyces cerevisiae (strain ATCC 204508 / S288c) (Baker's yeast).